The following is a 427-amino-acid chain: Putative tyrosine recombinase XerC (427 aa).

A Core-binding (CB) domain is found at 1 to 81 (MTPQQLTEEY…HLRTIWGYAI (81 aa)). The Tyr recombinase domain occupies 116-305 (RARSWLSMQV…DYDHMRAVLH (190 aa)). Active-site residues include Arg-156, Lys-183, His-256, Arg-259, and His-283. The O-(3'-phospho-DNA)-tyrosine intermediate role is filled by Tyr-292. 2 disordered regions span residues 323–384 (SGSP…PPDT) and 401–427 (RAAT…DSLA). Residues 350–362 (ARTEPSEPREHTQ) are compositionally biased toward basic and acidic residues. A compositionally biased stretch (low complexity) spans 402 to 413 (AATASAVPAATS).

It belongs to the 'phage' integrase family.

It is found in the cytoplasm. Functionally, site-specific tyrosine recombinase, which acts by catalyzing the cutting and rejoining of the recombining DNA molecules. The sequence is that of Putative tyrosine recombinase XerC from Pseudomonas aeruginosa.